The chain runs to 352 residues: Photosystem II D2 protein (352 aa).

A helical transmembrane segment spans residues 40–60 (CAYLALGGWLTGTTFVTSWYT). Chlorophyll a is bound at residue H117. Residues 124 to 140 (GFMLRQFEIAQSVRLRP) form a helical membrane-spanning segment. Positions 129 and 142 each coordinate pheophytin a. The helical transmembrane segment at 152-165 (VFVSVFLIYPLGQS) threads the bilayer. H197 is a binding site for chlorophyll a. Residues 207–227 (AALLCAIHGATVENTLFEDGD) traverse the membrane as a helical segment. The a plastoquinone site is built by H214 and F261. Position 214 (H214) interacts with Fe cation. H268 is a Fe cation binding site. The chain crosses the membrane as a helical span at residues 278-294 (GLWMSALGVVGLALNLR).

This sequence belongs to the reaction center PufL/M/PsbA/D family. In terms of assembly, PSII is composed of 1 copy each of membrane proteins PsbA, PsbB, PsbC, PsbD, PsbE, PsbF, PsbH, PsbI, PsbJ, PsbK, PsbL, PsbM, PsbT, PsbY, PsbZ, Psb30/Ycf12, at least 3 peripheral proteins of the oxygen-evolving complex and a large number of cofactors. It forms dimeric complexes. The D1/D2 heterodimer binds P680, chlorophylls that are the primary electron donor of PSII, and subsequent electron acceptors. It shares a non-heme iron and each subunit binds pheophytin, quinone, additional chlorophylls, carotenoids and lipids. There is also a Cl(-1) ion associated with D1 and D2, which is required for oxygen evolution. The PSII complex binds additional chlorophylls, carotenoids and specific lipids. is required as a cofactor.

It localises to the plastid. The protein resides in the chloroplast thylakoid membrane. The catalysed reaction is 2 a plastoquinone + 4 hnu + 2 H2O = 2 a plastoquinol + O2. Its function is as follows. Photosystem II (PSII) is a light-driven water:plastoquinone oxidoreductase that uses light energy to abstract electrons from H(2)O, generating O(2) and a proton gradient subsequently used for ATP formation. It consists of a core antenna complex that captures photons, and an electron transfer chain that converts photonic excitation into a charge separation. The D1/D2 (PsbA/PsbD) reaction center heterodimer binds P680, the primary electron donor of PSII as well as several subsequent electron acceptors. D2 is needed for assembly of a stable PSII complex. The polypeptide is Photosystem II D2 protein (Bigelowiella natans (Pedinomonas minutissima)).